Here is a 552-residue protein sequence, read N- to C-terminus: ATP synthase subunit alpha (552 aa).

An ATP-binding site is contributed by 173–180; sequence GDRQTGKT. The disordered stretch occupies residues 516–552; it reads DGKPLVNEPAPSPLDPGLVRQESIPVHRPAARKDDEG.

It belongs to the ATPase alpha/beta chains family. In terms of assembly, F-type ATPases have 2 components, CF(1) - the catalytic core - and CF(0) - the membrane proton channel. CF(1) has five subunits: alpha(3), beta(3), gamma(1), delta(1), epsilon(1). CF(0) has three main subunits: a(1), b(2) and c(9-12). The alpha and beta chains form an alternating ring which encloses part of the gamma chain. CF(1) is attached to CF(0) by a central stalk formed by the gamma and epsilon chains, while a peripheral stalk is formed by the delta and b chains.

It localises to the cell membrane. The catalysed reaction is ATP + H2O + 4 H(+)(in) = ADP + phosphate + 5 H(+)(out). Functionally, produces ATP from ADP in the presence of a proton gradient across the membrane. The alpha chain is a regulatory subunit. The polypeptide is ATP synthase subunit alpha (Frankia casuarinae (strain DSM 45818 / CECT 9043 / HFP020203 / CcI3)).